The following is a 47-amino-acid chain: GVACLCDADGPSVSGNTLSGILWLAGCPSGWHNCKAHGPTIGWCCKK.

3 disulfide bridges follow: Cys4/Cys44, Cys6/Cys34, and Cys27/Cys45.

This sequence belongs to the sea anemone sodium channel inhibitory toxin family. Type I subfamily.

The protein resides in the secreted. It is found in the nematocyst. Binds specifically to voltage-gated sodium channels (Nav), thereby delaying their inactivation. This toxin is active on a variety of voltage-gated sodium channels (Nav1.1/SCN1A, Nav1.2/SCN2A, Nav1.3/SCN3A, Nav1.4/SCN4A, Nav1.5/SCN5A and Nav1.6/SCN8A). This Anthopleura xanthogrammica (Giant green sea anemone) protein is Delta-actitoxin-Axm1e.